The following is a 419-amino-acid chain: C2 calcium-dependent domain-containing protein 4C (419 aa).

Disordered stretches follow at residues 1–96, 115–136, 151–225, and 247–300; these read MRKT…LASE, EDWTAEEATNADPQAQGAMSLP, AESP…SPFG, and VSQL…HTVK. Over residues 75 to 94 the composition is skewed to low complexity; it reads LASPGPRRAPRSPRLPAKLA. Residues 186-196 show a composition bias toward gly residues; that stretch reads KGNGGDGGSRE. Over residues 212 to 225 the composition is skewed to polar residues; it reads ESDTGSSAESSPFG. Phosphoserine occurs at positions 259, 261, and 270. Positions 303-419 constitute a C2 domain; it reads TRGSVRLLAE…LPLTSLLPFL (117 aa).

This sequence belongs to the C2CD4 family.

The polypeptide is C2 calcium-dependent domain-containing protein 4C (C2cd4c) (Mus musculus (Mouse)).